Reading from the N-terminus, the 446-residue chain is Neuropeptide Y receptor type 5 (446 aa).

The Extracellular segment spans residues 1–42 (MGSEIPDYYNKTLASENNTVATRNSGFPVWEDYKGSVDDLQY). Asparagine 10 and asparagine 17 each carry an N-linked (GlcNAc...) asparagine glycan. A helical membrane pass occupies residues 43–63 (FLIGLYTFVSLLGFMGNLLIL). Topologically, residues 64–77 (MAVMRKRNQKTTVN) are cytoplasmic. Residues 78 to 98 (FLIGNLAFSDILVVLFCSPFT) traverse the membrane as a helical segment. Over 99 to 117 (LTSVLLDQWMFGKVMCHIM) the chain is Extracellular. Cysteine 114 and cysteine 198 form a disulfide bridge. A helical transmembrane segment spans residues 118–138 (PFLQCVTVLVSTLILISIAIV). Topologically, residues 139-156 (RYHMIKHPVSNNLTANHG) are cytoplasmic. The helical transmembrane segment at 157-177 (YFLIATVWTLGLAICSPLPVF) threads the bilayer. At 178 to 208 (HSLVELQESFGSAWLSSRYLCVESWPSDSYR) the chain is on the extracellular side. A helical transmembrane segment spans residues 209–229 (IAFTISLLLVQYILPLVCLTV). Over 230-369 (SHTSVCRTIS…RKRSRSVFYR (140 aa)) the chain is Cytoplasmic. The segment at 297–325 (RPAPAGPALESREGRPPGKVGSMQSQPPP) is disordered. The chain crosses the membrane as a helical span at residues 370–390 (LTVLILVFAVSWMPLHLFHVV). At 391–407 (TDFNDNLISNRHFKLVY) the chain is on the extracellular side. A helical transmembrane segment spans residues 408–428 (CICHLLGMMSCCLNPILYGFL). Residues 429 to 446 (NNGIKADLMSLIHCLHVS) are Cytoplasmic-facing. Cysteine 442 carries the S-palmitoyl cysteine lipid modification.

The protein belongs to the G-protein coupled receptor 1 family.

Its subcellular location is the cell membrane. Receptor for neuropeptide Y and peptide YY. The activity of this receptor is mediated by G proteins that inhibit adenylate cyclase activity. Seems to be associated with food intake. Could be involved in feeding disorders. This Sus scrofa (Pig) protein is Neuropeptide Y receptor type 5 (NPY5R).